Here is a 247-residue protein sequence, read N- to C-terminus: Ribosomal RNA small subunit methyltransferase G (247 aa).

Residues Gly84, Phe89, 136 to 137 (AE), and Arg155 contribute to the S-adenosyl-L-methionine site.

This sequence belongs to the methyltransferase superfamily. RNA methyltransferase RsmG family.

The protein resides in the cytoplasm. Its function is as follows. Specifically methylates the N7 position of a guanine in 16S rRNA. The chain is Ribosomal RNA small subunit methyltransferase G from Prochlorococcus marinus (strain MIT 9313).